Reading from the N-terminus, the 185-residue chain is Small ribosomal subunit protein uS5 (185 aa).

Residues 18-81 (FVDKLVHINR…ESAKRALIRV (64 aa)) enclose the S5 DRBM domain.

Belongs to the universal ribosomal protein uS5 family. Part of the 30S ribosomal subunit. Contacts proteins S4 and S8.

Its function is as follows. With S4 and S12 plays an important role in translational accuracy. Located at the back of the 30S subunit body where it stabilizes the conformation of the head with respect to the body. This chain is Small ribosomal subunit protein uS5, found in Azorhizobium caulinodans (strain ATCC 43989 / DSM 5975 / JCM 20966 / LMG 6465 / NBRC 14845 / NCIMB 13405 / ORS 571).